A 148-amino-acid chain; its full sequence is UPF0756 membrane protein CKO_01811 (148 aa).

Transmembrane regions (helical) follow at residues 14–34, 51–71, 86–106, and 121–141; these read ALGF…LIIV, LTVG…SGSL, LVAI…VTLM, and VLGV…AGLV.

This sequence belongs to the UPF0756 family.

Its subcellular location is the cell membrane. The polypeptide is UPF0756 membrane protein CKO_01811 (Citrobacter koseri (strain ATCC BAA-895 / CDC 4225-83 / SGSC4696)).